Reading from the N-terminus, the 1383-residue chain is NPC intracellular cholesterol transporter 1 homolog 1 (1383 aa).

The N-terminal stretch at 1–20 (MKQLLIFCLLFGSIFHHGDA) is a signal peptide. Cystine bridges form between C22-C76, C28-C39, C65-C111, C77-C115, C99-C246, C102-C167, C182-C187, and C235-C251. N42 carries N-linked (GlcNAc...) asparagine glycosylation. A glycan (N-linked (GlcNAc...) asparagine) is linked at N231. 2 helical membrane passes run 282-302 (IFVM…GFVF) and 353-373 (PKSH…GMIY). Residue N447 is glycosylated (N-linked (GlcNAc...) asparagine). Cystine bridges form between C464/C474 and C526/C541. An N-linked (GlcNAc...) asparagine glycan is attached at N558. 6 helical membrane-spanning segments follow: residues 627 to 647 (EIVT…FSLG), 665 to 685 (ICLG…SWGI), 697 to 717 (ALVV…FMVV), 746 to 766 (TMPA…IGGF), 780 to 800 (GLAV…LFVW), and 856 to 876 (IITG…SSKI). The SSD domain maps to 627–800 (EIVTVVIALA…CTIFLALFVW (174 aa)). Disulfide bonds link C929–C934, C976–C1046, C977–C1005, and C988–C1002. N-linked (GlcNAc...) asparagine glycans are attached at residues N993 and N1082. 5 helical membrane passes run 1126–1146 (IMPI…GIIC), 1157–1177 (ACAV…MYIF), 1179–1199 (IPVN…LIEF), 1226–1246 (IGPI…MFLS), and 1260–1280 (LFLI…PILL).

This sequence belongs to the patched family.

The protein localises to the membrane. The enzyme catalyses cholesterol(in) = cholesterol(out). Involved in the uptake or utilization of cholesterol. Ncr-1 and ncr-2 act redundantly to prevent dauer larva formation under favorable growth conditions, and are required for the normal functioning of ADF, ASI and ASG neurons. The polypeptide is NPC intracellular cholesterol transporter 1 homolog 1 (Caenorhabditis elegans).